Here is a 431-residue protein sequence, read N- to C-terminus: Histidine--tRNA ligase (431 aa).

Belongs to the class-II aminoacyl-tRNA synthetase family. Homodimer.

The protein localises to the cytoplasm. It carries out the reaction tRNA(His) + L-histidine + ATP = L-histidyl-tRNA(His) + AMP + diphosphate + H(+). In Neisseria meningitidis serogroup B (strain ATCC BAA-335 / MC58), this protein is Histidine--tRNA ligase.